A 680-amino-acid polypeptide reads, in one-letter code: UvrABC system protein B (680 aa).

Positions 27 to 422 (AGALGGVTFQ…GRMAGEHVAE (396 aa)) constitute a Helicase ATP-binding domain. ATP is bound at residue 40–47 (GATGTGKT). Residues 93–116 (YYDYYQPEAYIPQTDTYIEKSASI) carry the Beta-hairpin motif. Residues 443–609 (QVDDLLHEIH…PIVKRLDANS (167 aa)) form the Helicase C-terminal domain. Residues 641-676 (PELVSQLEIQMRDAAKKLEFEKAAEYRDKIHKLRER) enclose the UVR domain.

This sequence belongs to the UvrB family. As to quaternary structure, forms a heterotetramer with UvrA during the search for lesions. Interacts with UvrC in an incision complex.

Its subcellular location is the cytoplasm. Functionally, the UvrABC repair system catalyzes the recognition and processing of DNA lesions. A damage recognition complex composed of 2 UvrA and 2 UvrB subunits scans DNA for abnormalities. Upon binding of the UvrA(2)B(2) complex to a putative damaged site, the DNA wraps around one UvrB monomer. DNA wrap is dependent on ATP binding by UvrB and probably causes local melting of the DNA helix, facilitating insertion of UvrB beta-hairpin between the DNA strands. Then UvrB probes one DNA strand for the presence of a lesion. If a lesion is found the UvrA subunits dissociate and the UvrB-DNA preincision complex is formed. This complex is subsequently bound by UvrC and the second UvrB is released. If no lesion is found, the DNA wraps around the other UvrB subunit that will check the other stand for damage. The chain is UvrABC system protein B from Gloeobacter violaceus (strain ATCC 29082 / PCC 7421).